A 274-amino-acid chain; its full sequence is Undecaprenyl-diphosphatase 2 (274 aa).

6 helical membrane passes run 47–64 (VFVIVIQLGAILAVCWEY), 82–102 (WKFVTNLLIAFLPAVVLGLTF), 110–130 (LFSPVPVATAFIVGGLVILWA), 185–205 (ATEFSFFLAIPTLTAASLYDL), 219–239 (LMAVGFVVSFLSALVAVRGLI), and 249–269 (VFAWYRIAFGLVVLATAWSGL).

This sequence belongs to the UppP family.

Its subcellular location is the cell inner membrane. The enzyme catalyses di-trans,octa-cis-undecaprenyl diphosphate + H2O = di-trans,octa-cis-undecaprenyl phosphate + phosphate + H(+). Functionally, catalyzes the dephosphorylation of undecaprenyl diphosphate (UPP). Confers resistance to bacitracin. The chain is Undecaprenyl-diphosphatase 2 from Rhodospirillum rubrum (strain ATCC 11170 / ATH 1.1.1 / DSM 467 / LMG 4362 / NCIMB 8255 / S1).